The chain runs to 199 residues: GTP cyclohydrolase-2 (199 aa).

49-53 (RIHSE) contacts GTP. Residues cysteine 54, cysteine 65, and cysteine 67 each contribute to the Zn(2+) site. Residues glutamine 70, 92–94 (EGR), and threonine 114 contribute to the GTP site. The Proton acceptor role is filled by aspartate 126. Residue arginine 128 is the Nucleophile of the active site. 2 residues coordinate GTP: threonine 149 and lysine 154. The segment at 172–199 (ETGRNPHNSHYLETKRGKLGHLLEGDSE) is disordered.

This sequence belongs to the GTP cyclohydrolase II family. Zn(2+) is required as a cofactor.

The enzyme catalyses GTP + 4 H2O = 2,5-diamino-6-hydroxy-4-(5-phosphoribosylamino)-pyrimidine + formate + 2 phosphate + 3 H(+). It participates in cofactor biosynthesis; riboflavin biosynthesis; 5-amino-6-(D-ribitylamino)uracil from GTP: step 1/4. In terms of biological role, catalyzes the conversion of GTP to 2,5-diamino-6-ribosylamino-4(3H)-pyrimidinone 5'-phosphate (DARP), formate and pyrophosphate. The polypeptide is GTP cyclohydrolase-2 (Teredinibacter turnerae (strain ATCC 39867 / T7901)).